The primary structure comprises 373 residues: Chaperone protein DnaJ (373 aa).

One can recognise a J domain in the interval 5–70; that stretch reads DYYEVLGVNR…QKRAAYDQYG (66 aa). The CR-type zinc-finger motif lies at 133 to 211; the sequence is GTETKIRIPV…CHGGGRVKQH (79 aa). The Zn(2+) site is built by C146, C149, C163, C166, C185, C188, C199, and C202. 4 CXXCXGXG motif repeats span residues 146 to 153, 163 to 170, 185 to 192, and 199 to 206; these read CETCHGSG, CSTCGGHG, CPKCHGSG, and CPTCHGGG. The segment at 346-373 is disordered; the sequence is LEDINQQDSGKHSPREKSWMTKVKDFFQ. Basic and acidic residues predominate over residues 354 to 373; the sequence is SGKHSPREKSWMTKVKDFFQ.

This sequence belongs to the DnaJ family. Homodimer. It depends on Zn(2+) as a cofactor.

Its subcellular location is the cytoplasm. Its function is as follows. Participates actively in the response to hyperosmotic and heat shock by preventing the aggregation of stress-denatured proteins and by disaggregating proteins, also in an autonomous, DnaK-independent fashion. Unfolded proteins bind initially to DnaJ; upon interaction with the DnaJ-bound protein, DnaK hydrolyzes its bound ATP, resulting in the formation of a stable complex. GrpE releases ADP from DnaK; ATP binding to DnaK triggers the release of the substrate protein, thus completing the reaction cycle. Several rounds of ATP-dependent interactions between DnaJ, DnaK and GrpE are required for fully efficient folding. Also involved, together with DnaK and GrpE, in the DNA replication of plasmids through activation of initiation proteins. This is Chaperone protein DnaJ from Methylobacillus flagellatus (strain ATCC 51484 / DSM 6875 / VKM B-1610 / KT).